A 220-amino-acid chain; its full sequence is Thiopurine S-methyltransferase (220 aa).

Residues Trp14, Leu49, Glu70, and Arg127 each contribute to the S-adenosyl-L-methionine site.

It belongs to the class I-like SAM-binding methyltransferase superfamily. TPMT family.

The protein localises to the cytoplasm. It catalyses the reaction S-adenosyl-L-methionine + a thiopurine = S-adenosyl-L-homocysteine + a thiopurine S-methylether.. The polypeptide is Thiopurine S-methyltransferase (Gluconobacter oxydans (strain 621H) (Gluconobacter suboxydans)).